An 852-amino-acid chain; its full sequence is Kinesin-like protein KIF18B (852 aa).

In terms of domain architecture, Kinesin motor spans 7–351 (TLQVVVRVRP…LKYADRAKEI (345 aa)). 109-116 (GATGAGKT) is an ATP binding site. A coiled-coil region spans residues 366-393 (ISQYATICQQLQAEVAALRKKLQVYEGG). Disordered regions lie at residues 390-424 (YEGGGQPPPQDLPGSPKSGPPPEHQPCTPELPAGP) and 437-485 (QVER…RLTL). Residue serine 404 is modified to Phosphoserine. The residue at position 417 (threonine 417) is a Phosphothreonine. Positions 451–461 (QSPEDEDEGPA) are enriched in acidic residues. Serine 452, serine 480, and serine 558 each carry phosphoserine. 2 disordered regions span residues 575–594 (IPVPSPLCPEPPGYTGPVTR) and 602–689 (GPLH…SPRV). Over residues 577–588 (VPSPLCPEPPGY) the composition is skewed to pro residues. The Nuclear localization signal motif lies at 624-632 (PMEKKRRRP). 2 positions are modified to phosphoserine: serine 633 and serine 639. An MAPRE1-binding motif is present at residues 653–656 (SFLP). At serine 662 the chain carries Phosphoserine. Polar residues predominate over residues 664–673 (PDTQPSQGPS). Threonine 674 carries the phosphothreonine modification. The tract at residues 711 to 736 (TPLALPTRDLNATFDLSEEPPSKPSF) is KIF2C-binding. The interval 767 to 798 (MKGPKPTSSLPGTSACKKKRVASSSVSHGRSR) is disordered. Short sequence motifs (MAPRE1-binding) lie at residues 774–777 (SSLP) and 800–803 (ARLP). Position 822 is a phosphoserine (serine 822).

This sequence belongs to the TRAFAC class myosin-kinesin ATPase superfamily. Kinesin family. As to quaternary structure, interacts with MAPRE1; this interaction is required for efficient accumulation at microtubule plus ends. Interacts with KIF2C at microtubule tips; this interaction increases the affinity of both partners for microtubule plus ends and is required for robust microtubule depolymerization. KIF2C phosphorylation by AURKA or AURKB strongly reduces KIF18B-binding. Shows a prominent expression in the amygdala.

The protein resides in the nucleus. It localises to the cytoplasm. Its subcellular location is the cytoskeleton. Functionally, in complex with KIF2C, constitutes the major microtubule plus-end depolymerizing activity in mitotic cells. Its major role may be to transport KIF2C and/or MAPRE1 along microtubules. The polypeptide is Kinesin-like protein KIF18B (KIF18B) (Homo sapiens (Human)).